The primary structure comprises 295 residues: Very long chain fatty acid elongase 5 (295 aa).

The next 7 membrane-spanning stretches (helical) occupy residues 26–46, 64–84, 112–132, 150–170, 172–192, 207–223, and 227–247; these read WLLLDNYVPTIFFTALYLFIV, ILVVYNLGLTLLSFYMFYELV, VLWWYYFSKLIEFMDTFFFIL, MLNIWWFVMNWVPCGHSFFGA, LNSFIHVLMYSYYGLSAIPAI, LTQFVLTMTQTTCAMIW, and FPMGWLYFQNSYMISLIILFT. Positions 265-295 are disordered; it reads YQNGSASAVNGYTNSFSSLEDNVKQRKQRQN. Residues 266 to 284 show a composition bias toward polar residues; the sequence is QNGSASAVNGYTNSFSSLE.

It belongs to the ELO family. ELOVL5 subfamily.

It localises to the endoplasmic reticulum membrane. It is found in the cell projection. The protein localises to the dendrite. It catalyses the reaction a very-long-chain acyl-CoA + malonyl-CoA + H(+) = a very-long-chain 3-oxoacyl-CoA + CO2 + CoA. It carries out the reaction (6Z,9Z,12Z)-octadecatrienoyl-CoA + malonyl-CoA + H(+) = (8Z,11Z,14Z)-3-oxoeicosatrienoyl-CoA + CO2 + CoA. The catalysed reaction is (9Z,12Z,15Z)-octadecatrienoyl-CoA + malonyl-CoA + H(+) = (11Z,14Z,17Z)-3-oxoeicosatrienoyl-CoA + CO2 + CoA. The enzyme catalyses (9Z)-hexadecenoyl-CoA + malonyl-CoA + H(+) = 3-oxo-(11Z)-octadecenoyl-CoA + CO2 + CoA. It catalyses the reaction (9Z)-octadecenoyl-CoA + malonyl-CoA + H(+) = 3-oxo-(11Z)-eicosenoyl-CoA + CO2 + CoA. It carries out the reaction (11Z)-octadecenoyl-CoA + malonyl-CoA + H(+) = 3-oxo-(13Z)-eicosenoyl-CoA + CO2 + CoA. The catalysed reaction is (9Z,12Z)-octadecadienoyl-CoA + malonyl-CoA + H(+) = (11Z,14Z)-3-oxoicosa-11,14-dienoyl-CoA + CO2 + CoA. The enzyme catalyses (6Z,9Z,12Z,15Z)-octadecatetraenoyl-CoA + malonyl-CoA + H(+) = (8Z,11Z,14Z,17Z)-3-oxoicosatetraenoyl-CoA + CO2 + CoA. It catalyses the reaction (5Z,8Z,11Z,14Z)-eicosatetraenoyl-CoA + malonyl-CoA + H(+) = (7Z,10Z,13Z,16Z)-3-oxodocosatetraenoyl-CoA + CO2 + CoA. It carries out the reaction (5Z,8Z,11Z,14Z,17Z)-eicosapentaenoyl-CoA + malonyl-CoA + H(+) = 3-oxo-(7Z,10Z,13Z,16Z,19Z)-docosapentaenoyl-CoA + CO2 + CoA. It participates in lipid metabolism; polyunsaturated fatty acid biosynthesis. Its function is as follows. Catalyzes the first and rate-limiting reaction of the four reactions that constitute the long-chain fatty acids elongation cycle. This endoplasmic reticulum-bound enzymatic process allows the addition of 2 carbons to the chain of long- and very long-chain fatty acids (VLCFAs) per cycle. Condensing enzyme that acts specifically toward polyunsaturated acyl-CoA with the higher activity toward C18:3(n-6) acyl-CoA. May participate in the production of monounsaturated and of polyunsaturated VLCFAs of different chain lengths that are involved in multiple biological processes as precursors of membrane lipids and lipid mediators. In conditions where the essential linoleic and alpha linoleic fatty acids are lacking it is also involved in the synthesis of Mead acid from oleic acid. The protein is Very long chain fatty acid elongase 5 of Xenopus laevis (African clawed frog).